The chain runs to 209 residues: Glutathione S-transferase D1 (209 aa).

The GST N-terminal domain maps to 1 to 81; it reads MVDFYYLPGS…YLVEKYGKTD (81 aa). Residues Ser10, 51–53, and 65–67 each bind glutathione; these read HTI and ESR. The GST C-terminal domain maps to 87 to 208; the sequence is CPKKRAVINQ…AGCLEFKKYF (122 aa).

Belongs to the GST superfamily. Delta family. Homodimer.

It catalyses the reaction RX + glutathione = an S-substituted glutathione + a halide anion + H(+). The enzyme catalyses 1,1,1-trichloro-2,2-bis(4-chlorophenyl)ethane = 1,1-dichloro-2,2-bis(4-chlorophenyl)ethylene + chloride + H(+). Functionally, conjugation of reduced glutathione to a wide number of exogenous and endogenous hydrophobic electrophiles. Has DDT dehydrochlorinase activity. May be involved in detoxification. The polypeptide is Glutathione S-transferase D1 (Drosophila melanogaster (Fruit fly)).